The primary structure comprises 426 residues: Adenylosuccinate synthetase (426 aa).

GTP-binding positions include 18 to 24 and 46 to 48; these read GDEGKGK and GHT. The active-site Proton acceptor is the Asp19. 2 residues coordinate Mg(2+): Asp19 and Gly46. IMP contacts are provided by residues 19-22, 44-47, Thr136, Arg150, Gln222, Thr237, and Arg301; these read DEGK and NAGH. Catalysis depends on His47, which acts as the Proton donor. 297 to 303 provides a ligand contact to substrate; that stretch reads VTTKRKR. GTP is bound by residues Arg303, 329 to 331, and 413 to 415; these read KID and GTG.

Belongs to the adenylosuccinate synthetase family. As to quaternary structure, homodimer. Mg(2+) serves as cofactor.

It localises to the cytoplasm. It catalyses the reaction IMP + L-aspartate + GTP = N(6)-(1,2-dicarboxyethyl)-AMP + GDP + phosphate + 2 H(+). It participates in purine metabolism; AMP biosynthesis via de novo pathway; AMP from IMP: step 1/2. Plays an important role in the de novo pathway and in the salvage pathway of purine nucleotide biosynthesis. Catalyzes the first committed step in the biosynthesis of AMP from IMP. In Schistosoma mansoni (Blood fluke), this protein is Adenylosuccinate synthetase.